A 251-amino-acid chain; its full sequence is 4-hydroxy-tetrahydrodipicolinate reductase (251 aa).

8-13 (GALGRM) serves as a coordination point for NAD(+). Residue R36 participates in NADP(+) binding. Residues 89–91 (GTT) and 113–116 (TTNF) contribute to the NAD(+) site. Catalysis depends on H145, which acts as the Proton donor/acceptor. H146 is a binding site for (S)-2,3,4,5-tetrahydrodipicolinate. K149 serves as the catalytic Proton donor. 155 to 156 (GT) provides a ligand contact to (S)-2,3,4,5-tetrahydrodipicolinate.

Belongs to the DapB family.

The protein resides in the cytoplasm. It catalyses the reaction (S)-2,3,4,5-tetrahydrodipicolinate + NAD(+) + H2O = (2S,4S)-4-hydroxy-2,3,4,5-tetrahydrodipicolinate + NADH + H(+). It carries out the reaction (S)-2,3,4,5-tetrahydrodipicolinate + NADP(+) + H2O = (2S,4S)-4-hydroxy-2,3,4,5-tetrahydrodipicolinate + NADPH + H(+). The protein operates within amino-acid biosynthesis; L-lysine biosynthesis via DAP pathway; (S)-tetrahydrodipicolinate from L-aspartate: step 4/4. Functionally, catalyzes the conversion of 4-hydroxy-tetrahydrodipicolinate (HTPA) to tetrahydrodipicolinate. The sequence is that of 4-hydroxy-tetrahydrodipicolinate reductase from Methanocorpusculum labreanum (strain ATCC 43576 / DSM 4855 / Z).